A 427-amino-acid chain; its full sequence is Glutamate-1-semialdehyde 2,1-aminomutase (427 aa).

Position 265 is an N6-(pyridoxal phosphate)lysine (lysine 265).

The protein belongs to the class-III pyridoxal-phosphate-dependent aminotransferase family. HemL subfamily. In terms of assembly, homodimer. Requires pyridoxal 5'-phosphate as cofactor.

It localises to the cytoplasm. The enzyme catalyses (S)-4-amino-5-oxopentanoate = 5-aminolevulinate. It functions in the pathway porphyrin-containing compound metabolism; protoporphyrin-IX biosynthesis; 5-aminolevulinate from L-glutamyl-tRNA(Glu): step 2/2. The protein is Glutamate-1-semialdehyde 2,1-aminomutase of Pseudomonas putida (strain W619).